Consider the following 377-residue polypeptide: Ribosomal RNA large subunit methyltransferase G (377 aa).

This sequence belongs to the methyltransferase superfamily. RlmG family.

It localises to the cytoplasm. The catalysed reaction is guanosine(1835) in 23S rRNA + S-adenosyl-L-methionine = N(2)-methylguanosine(1835) in 23S rRNA + S-adenosyl-L-homocysteine + H(+). Specifically methylates the guanine in position 1835 (m2G1835) of 23S rRNA. This chain is Ribosomal RNA large subunit methyltransferase G, found in Shewanella sp. (strain MR-4).